A 544-amino-acid polypeptide reads, in one-letter code: Chaperonin GroEL (544 aa).

Residues 29-32 (TLGP), 86-90 (DGTTT), G413, 476-478 (NAA), and D492 contribute to the ATP site.

Belongs to the chaperonin (HSP60) family. Forms a cylinder of 14 subunits composed of two heptameric rings stacked back-to-back. Interacts with the co-chaperonin GroES.

It is found in the cytoplasm. The enzyme catalyses ATP + H2O + a folded polypeptide = ADP + phosphate + an unfolded polypeptide.. Its function is as follows. Together with its co-chaperonin GroES, plays an essential role in assisting protein folding. The GroEL-GroES system forms a nano-cage that allows encapsulation of the non-native substrate proteins and provides a physical environment optimized to promote and accelerate protein folding. This chain is Chaperonin GroEL, found in Bacillus thuringiensis (strain Al Hakam).